The chain runs to 273 residues: MTKLIIHLVSDSSVQTAKHAANSALAQFTSIKQKLYHWPMIRNCELLNEVLSKIESKHGIVLYTIADQELRKTLTKFCYELKIPCISVIGKIIKEMSVFSGIEIEKEQNYNYKFDKTYFDTLNAIDYAIRHDDGQMINELSESDIILIGPSRTSKTPTSVFLAYNGLKAANIPYVYNCPFPDFIEKDIDQLVVGLVINPNRLIEIREARLNLLQINENKSYTDFNIVQRECIEVRKICNQRNWPVIDVSTRSIEETAALIMRIYYNRKNKYHK.

149–156 (GPSRTSKT) contacts ADP.

Belongs to the pyruvate, phosphate/water dikinase regulatory protein family. PDRP subfamily.

It catalyses the reaction N(tele)-phospho-L-histidyl/L-threonyl-[pyruvate, phosphate dikinase] + ADP = N(tele)-phospho-L-histidyl/O-phospho-L-threonyl-[pyruvate, phosphate dikinase] + AMP + H(+). The catalysed reaction is N(tele)-phospho-L-histidyl/O-phospho-L-threonyl-[pyruvate, phosphate dikinase] + phosphate + H(+) = N(tele)-phospho-L-histidyl/L-threonyl-[pyruvate, phosphate dikinase] + diphosphate. In terms of biological role, bifunctional serine/threonine kinase and phosphorylase involved in the regulation of the pyruvate, phosphate dikinase (PPDK) by catalyzing its phosphorylation/dephosphorylation. The sequence is that of Putative pyruvate, phosphate dikinase regulatory protein from Rickettsia prowazekii (strain Madrid E).